Consider the following 222-residue polypeptide: 26S proteasome non-ATPase regulatory subunit 9 (222 aa).

In terms of domain architecture, PDZ spans 108-194 (QARDMAEARE…KPLNVTVIRR (87 aa)). Ser128 is modified (phosphoserine).

The protein belongs to the proteasome subunit p27 family. In terms of assembly, interacts with PSMC3. Part of a transient complex (modulator) containing PSMD9, PSMC6 and PSMC3 formed during the assembly of the 26S proteasome.

In terms of biological role, acts as a chaperone during the assembly of the 26S proteasome, specifically of the base subcomplex of the PA700/19S regulatory complex (RC). During the base subcomplex assembly is part of an intermediate PSMD9:PSMC6:PSMC3 module, also known as modulator trimer complex; PSMD9 is released during the further base assembly process. The polypeptide is 26S proteasome non-ATPase regulatory subunit 9 (Psmd9) (Mus musculus (Mouse)).